A 400-amino-acid chain; its full sequence is Argininosuccinate synthase (400 aa).

ATP is bound by residues A11 to S19 and A38. 2 residues coordinate L-citrulline: Y89 and S94. G119 is a binding site for ATP. 3 residues coordinate L-aspartate: T121, N125, and D126. N125 is an L-citrulline binding site. The L-citrulline site is built by R129, S178, S187, E263, and Y275.

The protein belongs to the argininosuccinate synthase family. Type 1 subfamily. As to quaternary structure, homotetramer.

Its subcellular location is the cytoplasm. The catalysed reaction is L-citrulline + L-aspartate + ATP = 2-(N(omega)-L-arginino)succinate + AMP + diphosphate + H(+). Its pathway is amino-acid biosynthesis; L-arginine biosynthesis; L-arginine from L-ornithine and carbamoyl phosphate: step 2/3. The chain is Argininosuccinate synthase from Desulfatibacillum aliphaticivorans.